Consider the following 579-residue polypeptide: DNA ligase 1 (579 aa).

Glutamate 244 serves as a coordination point for ATP. Lysine 246 serves as the catalytic N6-AMP-lysine intermediate. ATP is bound by residues arginine 251, arginine 266, glutamate 296, phenylalanine 342, arginine 419, and lysine 425.

This sequence belongs to the ATP-dependent DNA ligase family. Requires Mg(2+) as cofactor.

The enzyme catalyses ATP + (deoxyribonucleotide)n-3'-hydroxyl + 5'-phospho-(deoxyribonucleotide)m = (deoxyribonucleotide)n+m + AMP + diphosphate.. DNA ligase that seals nicks in double-stranded DNA during DNA replication, DNA recombination and DNA repair. This chain is DNA ligase 1, found in Methanosarcina mazei (strain ATCC BAA-159 / DSM 3647 / Goe1 / Go1 / JCM 11833 / OCM 88) (Methanosarcina frisia).